The following is a 1014-amino-acid chain: Klotho (1014 aa).

A signal peptide spans 1–35; it reads MPASAPPRRPRPPPPSLSLSLLLVLLGLAGRRLRA. Topologically, residues 36-983 are extracellular; it reads EPGDGAQTWA…ECSFFHTRKP (948 aa). Glycosyl hydrolase-1 stretches follow at residues 59–508 and 517–955; these read FQGT…KNGF and LEGT…SNGF. 6 N-linked (GlcNAc...) asparagine glycosylation sites follow: N161, N285, N346, N609, N614, and N696. Residues 984 to 1004 form a helical membrane-spanning segment; sequence LVAFIAFLFFAFIVSLSLIFY. The Cytoplasmic segment spans residues 1005 to 1014; sequence YSKKGRRRYQ.

Belongs to the glycosyl hydrolase 1 family. Klotho subfamily. Homodimer. Interacts with FGF23 and FGFR1.

The protein localises to the cell membrane. The protein resides in the apical cell membrane. It localises to the secreted. It catalyses the reaction a beta-D-glucuronoside + H2O = D-glucuronate + an alcohol. Its function is as follows. May have weak glycosidase activity towards glucuronylated steroids. However, it lacks essential active site Glu residues at positions 241 and 874, suggesting it may be inactive as a glycosidase in vivo. May be involved in the regulation of calcium and phosphorus homeostasis by inhibiting the synthesis of active vitamin D. Essential factor for the specific interaction between FGF23 and FGFR1. Functionally, the Klotho peptide generated by cleavage of the membrane-bound isoform may be an anti-aging circulating hormone which would extend life span by inhibiting insulin/IGF1 signaling. This chain is Klotho (KL), found in Macaca fascicularis (Crab-eating macaque).